Consider the following 2380-residue polypeptide: Probable polyketide synthase 25 (2380 aa).

Positions 1–18 are enriched in polar residues; sequence MDNSYLNNPQFDINNGNK. The tract at residues 1 to 29 is disordered; the sequence is MDNSYLNNPQFDINNGNKEVTDDDNNKNN. The Ketosynthase family 3 (KS3) domain maps to 31–457; sequence DNLVAIVGVG…GSNCCLVLSQ (427 aa). Residues cysteine 198, histidine 340, and histidine 380 each act as for beta-ketoacyl synthase activity in the active site. The tract at residues 649–682 is acyl/malonyl transferase; sequence GIKASFMLGHSLGEVTTAYCSGMIDIDQLCYLIY. Serine 659 serves as the catalytic For acyl/malonyl transferase activity. Residues 948-1070 form an N-terminal hotdog fold region; the sequence is ISILGNSMQD…ANFQLYNNGK (123 aa). The PKS/mFAS DH domain occupies 948 to 1234; sequence ISILGNSMQD…CTSLTPVKDP (287 aa). Histidine 982 functions as the Proton acceptor; for dehydratase activity in the catalytic mechanism. Residues 1085–1234 form a C-terminal hotdog fold region; sequence NLSSIPWDKF…CTSLTPVKDP (150 aa). Residue aspartate 1148 is the Proton donor; for dehydratase activity of the active site. One can recognise a Carrier domain in the interval 2299 to 2376; sequence KNSTNIKDKF…MVCQIINDNF (78 aa). An O-(pantetheine 4'-phosphoryl)serine modification is found at serine 2336.

Pantetheine 4'-phosphate is required as a cofactor.

Probable polyketide synthase. This is Probable polyketide synthase 25 (pks25) from Dictyostelium discoideum (Social amoeba).